We begin with the raw amino-acid sequence, 357 residues long: 3-isopropylmalate dehydrogenase (357 aa).

76–89 (GPQWDTIDPALRPE) lines the NAD(+) pocket. Residues arginine 96, arginine 106, arginine 134, and aspartate 224 each coordinate substrate. Positions 224, 248, and 252 each coordinate Mg(2+). Residue 282-294 (GSAPDIAGQGIAN) coordinates NAD(+).

The protein belongs to the isocitrate and isopropylmalate dehydrogenases family. LeuB type 1 subfamily. Homodimer. The cofactor is Mg(2+). Mn(2+) is required as a cofactor.

Its subcellular location is the cytoplasm. It carries out the reaction (2R,3S)-3-isopropylmalate + NAD(+) = 4-methyl-2-oxopentanoate + CO2 + NADH. Its pathway is amino-acid biosynthesis; L-leucine biosynthesis; L-leucine from 3-methyl-2-oxobutanoate: step 3/4. Functionally, catalyzes the oxidation of 3-carboxy-2-hydroxy-4-methylpentanoate (3-isopropylmalate) to 3-carboxy-4-methyl-2-oxopentanoate. The product decarboxylates to 4-methyl-2 oxopentanoate. This is 3-isopropylmalate dehydrogenase from Xanthomonas campestris pv. campestris (strain 8004).